We begin with the raw amino-acid sequence, 191 residues long: Molybdenum cofactor guanylyltransferase (191 aa).

GTP is bound by residues 13–15, lysine 26, aspartate 72, and aspartate 102; that span reads LAG. Position 102 (aspartate 102) interacts with Mg(2+).

This sequence belongs to the MobA family. As to quaternary structure, monomer. Mg(2+) serves as cofactor.

The protein resides in the cytoplasm. The catalysed reaction is Mo-molybdopterin + GTP + H(+) = Mo-molybdopterin guanine dinucleotide + diphosphate. Functionally, transfers a GMP moiety from GTP to Mo-molybdopterin (Mo-MPT) cofactor (Moco or molybdenum cofactor) to form Mo-molybdopterin guanine dinucleotide (Mo-MGD) cofactor. This is Molybdenum cofactor guanylyltransferase from Pseudomonas putida (strain GB-1).